Here is a 239-residue protein sequence, read N- to C-terminus: MAALKSWLSRSVTSFFRYRQCLCVPVVANFKKRCFSELIRPWHKTVTIGFGVTLCAVPIAQKSEPHSLSSEALMRRAVSLVTDSTSTFLSQTTYALIEAITEYTKAVYTLTSLYRQYTSLLGKMNSEEEDEVWQVIIGARAEMTSKHQEYLKLETTWMTAVGLSEMAAEAAYQTGADQASITARNHIQLVKLQVEEVHQLSRKAETKLAEAQIEELRQKTQEEGEERAESEQEAYLRED.

The transit peptide at 1 to 21 (MAALKSWLSRSVTSFFRYRQC) directs the protein to the mitochondrion. The IAP-binding signature appears at 56-60 (AVPIA). Residues 217–239 (RQKTQEEGEERAESEQEAYLRED) form a disordered region.

It belongs to the Smac/DIABLO protein family. As to quaternary structure, homodimer. Interacts with BIRC2/c-IAP1 (via BIR3 domain). Interacts with BIRC6/BRUCE; inhibits BIRC6 activity. Interacts with BIRC7/livin. Interacts with XIAP/BIRC4 (via BIR3 domain). Interacts with the monomeric and dimeric form of BIRC5/survivin. Interacts with AREL1 (via HECT domain); in the cytoplasm following induction of apoptosis. Interacts with BEX3. Ubiquitinated by BIRC7/livin. Ubiquitinated by BIRC6. Post-translationally, the precursor form is proteolytically cleaved by mitochondrial processing peptidase MPP to remove the transit peptide and produce an intermediate form. This is then processed by PARL to produce the mature cleaved form which is released from mitochondria into the cytosol in apoptotic cells. As to expression, ubiquitously expressed with highest expression in testis. Expression is also high in heart, liver, kidney, spleen, prostate and ovary. Low in brain, lung, thymus and peripheral blood leukocytes. Isoform 3 is ubiquitously expressed.

The protein resides in the mitochondrion. It is found in the cytoplasm. It localises to the cytosol. Functionally, promotes apoptosis by activating caspases in the cytochrome c/Apaf-1/caspase-9 pathway. Acts by opposing the inhibitory activity of inhibitor of apoptosis proteins (IAP). Inhibits the activity of BIRC6/BRUCE by inhibiting its binding to caspases. Its function is as follows. Attenuates the stability and apoptosis-inhibiting activity of XIAP/BIRC4 by promoting XIAP/BIRC4 ubiquitination and degradation through the ubiquitin-proteasome pathway. Also disrupts XIAP/BIRC4 interacting with processed caspase-9 and promotes caspase-3 activation. Defective in the capacity to down-regulate the XIAP/BIRC4 abundance. The sequence is that of Diablo IAP-binding mitochondrial protein from Homo sapiens (Human).